The chain runs to 201 residues: Large ribosomal subunit protein bL25 (201 aa).

Belongs to the bacterial ribosomal protein bL25 family. CTC subfamily. In terms of assembly, part of the 50S ribosomal subunit; part of the 5S rRNA/L5/L18/L25 subcomplex. Contacts the 5S rRNA. Binds to the 5S rRNA independently of L5 and L18.

Its function is as follows. This is one of the proteins that binds to the 5S RNA in the ribosome where it forms part of the central protuberance. The polypeptide is Large ribosomal subunit protein bL25 (Chlorobaculum parvum (strain DSM 263 / NCIMB 8327) (Chlorobium vibrioforme subsp. thiosulfatophilum)).